The chain runs to 1581 residues: Maestro heat-like repeat-containing protein family member 2B (1581 aa).

HEAT repeat units lie at residues 123 to 160 (FMMMTLLTMQTMLRLVEDENMRQTFCIALENFSKSIYK), 305 to 342 (ANPVDLLDFFDEQIRSTNEAVRTGILTLLRSTINAEEP), 401 to 441 (MSNR…LVIG), 464 to 501 (DYLFNIIRILIMAEEKKKRDIQESTALVVSTGAVKLPS), 526 to 543 (AIGLLKIMPEIIHPKLAE), 544 to 580 (MWKTRMPALLQPLEGSNASIVLWETMLLQLLKESLWK), 658 to 695 (ENHLDIVLNVLKTFQDKEKFFVNRCKGIFSGKKSLTKT), 773 to 815 (TYKE…LKPA), 960 to 997 (CQEVDRLQGLQEGLDSEDEQVQIKISSKIAKIVCKFIP), 1017 to 1055 (PLCTKACGIWMIAALKEHGALLEDQLLEILSTIYHHMPV), 1112 to 1150 (KLMRALIKKLVARLEDDIAGTEAISVACAIYEVILTGAH), 1153 to 1191 (HLYPELFTLLLKLVSCSLGQKMPMSTLSQRRRVMQLGER), 1254 to 1291 (GVILDIMEHLLSSLTSSSENYRITGMAFFSELMKEPIL), 1295 to 1332 (GNLRDVLIFMDQNARDSNAILRQMAIRGLGNTACGAPH), 1359 to 1379 (CESLKALKKILELLTERDINF), and 1380 to 1416 (YFKEIVLQTRTFFEDEQDDVRLTAISLFEDLATLTGR).

Found in a complex at least composed of MROH2B isoform 2, PRKACA isoform 2 and TCP11. Interacts with PRKACA isoform 2. Interacts with TCP11. Constitutively phosphorylated on serine and threonine residues in acrosomal region of the sperm head, midpiece and flagellar regions of noncapacitated spermatozoa. Phosphorylation on tyrosine residues increases upon sperm capacitation within the acrosomal and tail regions in a protein kinase A (PKA)-dependent signaling pathway. In terms of tissue distribution, expressed strongly in round spermatids and fully mature spermatozoa. Expressed weakly in pachytene spermatocytes (at protein level). Isoform 2 is specifically expressed in the testis. Isoform 2 is expressed in pachytene spermatocytes and round spermatids. Isoform 3 is weakly expressed in testis.

Its subcellular location is the cytoplasm. The protein localises to the cytoplasmic vesicle. It is found in the secretory vesicle. It localises to the acrosome. The protein resides in the cell projection. Its subcellular location is the cilium. The protein localises to the flagellum. May play a role in the process of sperm capacitation. The chain is Maestro heat-like repeat-containing protein family member 2B from Mus musculus (Mouse).